Consider the following 230-residue polypeptide: Small ribosomal subunit protein uS7m (230 aa).

The protein belongs to the universal ribosomal protein uS7 family. Part of the small ribosomal subunit.

It is found in the mitochondrion. One of the primary rRNA binding proteins, it binds directly to 18S rRNA where it nucleates assembly of the head domain of the small subunit. The sequence is that of Small ribosomal subunit protein uS7m (RPS7) from Marchantia polymorpha (Common liverwort).